The following is a 234-amino-acid chain: Putative lipoyltransferase 2, mitochondrial (234 aa).

Residues 1–28 (MPFVRPLVTVVRAGRHSYSAGLQLQQRL) constitute a mitochondrion transit peptide. A BPL/LPL catalytic domain is found at 39 to 220 (AEFRNYLVLQ…SFAKVFECRL (182 aa)). Substrate contacts are provided by residues 83–90 (RGGLITFH), 150–152 (AIG), and 163–165 (GIG). The active-site Acyl-thioester intermediate is cysteine 181.

Belongs to the LipB family.

The protein resides in the mitochondrion. The catalysed reaction is octanoyl-[ACP] + L-lysyl-[protein] = N(6)-octanoyl-L-lysyl-[protein] + holo-[ACP] + H(+). The protein operates within protein modification; protein lipoylation via endogenous pathway; protein N(6)-(lipoyl)lysine from octanoyl-[acyl-carrier-protein]: step 1/2. In terms of biological role, catalyzes the transfer of endogenously produced octanoic acid from octanoyl-acyl-carrier-protein onto the lipoyl domains of lipoate-dependent enzymes. Lipoyl-ACP can also act as a substrate although octanoyl-ACP is likely to be the physiological substrate. The polypeptide is Putative lipoyltransferase 2, mitochondrial (Drosophila melanogaster (Fruit fly)).